The chain runs to 645 residues: Translation factor GUF1, mitochondrial (645 aa).

In terms of domain architecture, tr-type G spans 44-228 (ENYRNFSIVA…AIIDRIPPPT (185 aa)). GTP-binding positions include 53–60 (AHVDHGKS), 120–124 (DTPGH), and 174–177 (NKID).

The protein belongs to the TRAFAC class translation factor GTPase superfamily. Classic translation factor GTPase family. LepA subfamily.

It is found in the mitochondrion inner membrane. The enzyme catalyses GTP + H2O = GDP + phosphate + H(+). Functionally, promotes mitochondrial protein synthesis. May act as a fidelity factor of the translation reaction, by catalyzing a one-codon backward translocation of tRNAs on improperly translocated ribosomes. Binds to mitochondrial ribosomes in a GTP-dependent manner. The polypeptide is Translation factor GUF1, mitochondrial (Saccharomyces cerevisiae (strain ATCC 204508 / S288c) (Baker's yeast)).